Reading from the N-terminus, the 36-residue chain is Phospholipase A2 hemilipin-2 (36 aa).

It belongs to the phospholipase A2 family. Group III subfamily. In terms of assembly, heterodimer composed of a small subunit and a large subunit; disulfid-linked. Requires Ca(2+) as cofactor. As to expression, expressed by the venom gland.

The protein resides in the secreted. The enzyme catalyses a 1,2-diacyl-sn-glycero-3-phosphocholine + H2O = a 1-acyl-sn-glycero-3-phosphocholine + a fatty acid + H(+). Its function is as follows. Scorpion venom phospholipase A2 (PLA2) that impacts angiogenesis in vitro and in vivo without showing any cytotoxic or apoptotic signs. The antiangiogenic effect is independent from the catalytic activity and seems to be held by its small subunit. PLA2 catalyzes the calcium-dependent hydrolysis of the 2-acyl groups in 3-sn-phosphoglycerides. The protein is Phospholipase A2 hemilipin-2 of Hemiscorpius lepturus (Scorpion).